A 428-amino-acid polypeptide reads, in one-letter code: Serine--tRNA ligase (428 aa).

Residue 235-237 coordinates L-serine; it reads TAE. 266–268 lines the ATP pocket; sequence RSE. Glu289 contacts L-serine. 353 to 356 is a binding site for ATP; that stretch reads EISS. L-serine is bound at residue Ser389.

Belongs to the class-II aminoacyl-tRNA synthetase family. Type-1 seryl-tRNA synthetase subfamily. Homodimer. The tRNA molecule binds across the dimer.

The protein resides in the cytoplasm. The catalysed reaction is tRNA(Ser) + L-serine + ATP = L-seryl-tRNA(Ser) + AMP + diphosphate + H(+). It catalyses the reaction tRNA(Sec) + L-serine + ATP = L-seryl-tRNA(Sec) + AMP + diphosphate + H(+). Its pathway is aminoacyl-tRNA biosynthesis; selenocysteinyl-tRNA(Sec) biosynthesis; L-seryl-tRNA(Sec) from L-serine and tRNA(Sec): step 1/1. Functionally, catalyzes the attachment of serine to tRNA(Ser). Is also able to aminoacylate tRNA(Sec) with serine, to form the misacylated tRNA L-seryl-tRNA(Sec), which will be further converted into selenocysteinyl-tRNA(Sec). This Psychromonas ingrahamii (strain DSM 17664 / CCUG 51855 / 37) protein is Serine--tRNA ligase.